The following is a 175-amino-acid chain: ATP synthase subunit b (175 aa).

The helical transmembrane segment at 20–40 (LIFWTAITFVIVLLILKKIAW) threads the bilayer.

Belongs to the ATPase B chain family. As to quaternary structure, F-type ATPases have 2 components, F(1) - the catalytic core - and F(0) - the membrane proton channel. F(1) has five subunits: alpha(3), beta(3), gamma(1), delta(1), epsilon(1). F(0) has four main subunits: a(1), b(2) and c(10-14). The alpha and beta chains form an alternating ring which encloses part of the gamma chain. F(1) is attached to F(0) by a central stalk formed by the gamma and epsilon chains, while a peripheral stalk is formed by the delta and b chains.

Its subcellular location is the cell inner membrane. Its function is as follows. F(1)F(0) ATP synthase produces ATP from ADP in the presence of a proton or sodium gradient. F-type ATPases consist of two structural domains, F(1) containing the extramembraneous catalytic core and F(0) containing the membrane proton channel, linked together by a central stalk and a peripheral stalk. During catalysis, ATP synthesis in the catalytic domain of F(1) is coupled via a rotary mechanism of the central stalk subunits to proton translocation. Functionally, component of the F(0) channel, it forms part of the peripheral stalk, linking F(1) to F(0). The protein is ATP synthase subunit b of Chlorobium chlorochromatii (strain CaD3).